Here is a 383-residue protein sequence, read N- to C-terminus: Retrovirus-related Pol polyprotein from type-1 retrotransposable element R1 3 (383 aa).

A Reverse transcriptase domain is found at 1 to 88; the sequence is VDAFADDLLL…DRVRYLGVNV (88 aa). The tract at residues 229 to 383 is nucleic acid-binding endonuclease; that stretch reads LSLHECRELV…VQRMRENEES (155 aa).

The catalysed reaction is DNA(n) + a 2'-deoxyribonucleoside 5'-triphosphate = DNA(n+1) + diphosphate. This is Retrovirus-related Pol polyprotein from type-1 retrotransposable element R1 3 from Nasonia vitripennis (Parasitic wasp).